The primary structure comprises 137 residues: MSIMLTVSEVARKLGLNPQTLYFYERIGVVDHPQRNQSGYRVYQEKDLAILSFIRHAKDLGFSLEEIADILHLQSQQSLTCDEIYHKLTSKILQLESGIKEMEKMKDDLSKILSLCCQRISNGGKHGNCCLLNEQLT.

One can recognise an HTH merR-type domain in the interval 4–73; sequence MLTVSEVARK…LEEIADILHL (70 aa). The segment at residues 8 to 27 is a DNA-binding region (H-T-H motif); it reads SEVARKLGLNPQTLYFYERI.

This is an uncharacterized protein from Synechocystis sp. (strain ATCC 27184 / PCC 6803 / Kazusa).